Reading from the N-terminus, the 275-residue chain is Activator of basal transcription 1 (275 aa).

Position 1 is an N-acetylmethionine (M1). Acidic residues-rich tracts occupy residues 1–10 (MEVEGLELDT) and 25–34 (AEEEQEESED). The segment at 1–39 (MEVEGLELDTAELGPLEGSHQKLEAEEEQEESEDAAGGS) is disordered. Residues 46-145 (GIVYLGHIPP…RRRSPFRYDL (100 aa)) enclose the RRM domain. The stretch at 164 to 194 (AFERQVRRQRLRAEVAQAKRETDFYLRSVER) forms a coiled coil. The disordered stretch occupies residues 200–275 (AADGDSTRPN…RGNSSPARNS (76 aa)). Over residues 262–275 (PSESRGNSSPARNS) the composition is skewed to polar residues.

Belongs to the ESF2/ABP1 family. Interacts with ESF1/ABTAP. Interacts with IGHMBP2.

The protein localises to the nucleus. It localises to the nucleolus. In terms of biological role, could be a novel TATA-binding protein (TBP) which can function as a basal transcription activator. Can act as a regulator of basal transcription for class II genes. The sequence is that of Activator of basal transcription 1 (ABT1) from Bos taurus (Bovine).